A 387-amino-acid chain; its full sequence is Cysteine desulfurase IscS (387 aa).

Residues 73 to 74 (AT), Asn155, Gln183, and 203 to 205 (SAH) each bind pyridoxal 5'-phosphate. Lys206 carries the N6-(pyridoxal phosphate)lysine modification. Thr241 lines the pyridoxal 5'-phosphate pocket. Catalysis depends on Cys328, which acts as the Cysteine persulfide intermediate. [2Fe-2S] cluster is bound at residue Cys328.

This sequence belongs to the class-V pyridoxal-phosphate-dependent aminotransferase family. NifS/IscS subfamily. In terms of assembly, homodimer. Forms a heterotetramer with IscU, interacts with other sulfur acceptors. The cofactor is pyridoxal 5'-phosphate.

The protein localises to the cytoplasm. The catalysed reaction is (sulfur carrier)-H + L-cysteine = (sulfur carrier)-SH + L-alanine. The protein operates within cofactor biosynthesis; iron-sulfur cluster biosynthesis. Functionally, master enzyme that delivers sulfur to a number of partners involved in Fe-S cluster assembly, tRNA modification or cofactor biosynthesis. Catalyzes the removal of elemental sulfur atoms from cysteine to produce alanine. Functions as a sulfur delivery protein for Fe-S cluster synthesis onto IscU, an Fe-S scaffold assembly protein, as well as other S acceptor proteins. The chain is Cysteine desulfurase IscS from Helicobacter pylori (strain J99 / ATCC 700824) (Campylobacter pylori J99).